The sequence spans 295 residues: Ethanolamine ammonia-lyase small subunit (295 aa).

2 residues coordinate adenosylcob(III)alamin: Val-208 and Glu-229.

The protein belongs to the EutC family. As to quaternary structure, the basic unit is a heterodimer which dimerizes to form tetramers. The heterotetramers trimerize; 6 large subunits form a core ring with 6 small subunits projecting outwards. It depends on adenosylcob(III)alamin as a cofactor.

The protein resides in the bacterial microcompartment. It carries out the reaction ethanolamine = acetaldehyde + NH4(+). It participates in amine and polyamine degradation; ethanolamine degradation. Functionally, catalyzes the deamination of various vicinal amino-alcohols to oxo compounds. Allows this organism to utilize ethanolamine as the sole source of nitrogen and carbon in the presence of external vitamin B12. The polypeptide is Ethanolamine ammonia-lyase small subunit (Fusobacterium nucleatum subsp. nucleatum (strain ATCC 25586 / DSM 15643 / BCRC 10681 / CIP 101130 / JCM 8532 / KCTC 2640 / LMG 13131 / VPI 4355)).